A 493-amino-acid chain; its full sequence is Cysteine--tRNA ligase (493 aa).

Residue Cys-29 participates in Zn(2+) binding. The short motif at 31-41 (PTVYDFAHIGN) is the 'HIGH' region element. Zn(2+)-binding residues include Cys-227, His-252, and Glu-256. A 'KMSKS' region motif is present at residues 285-289 (KMSKS). Lys-288 is a binding site for ATP.

Belongs to the class-I aminoacyl-tRNA synthetase family. As to quaternary structure, monomer. It depends on Zn(2+) as a cofactor.

It is found in the cytoplasm. It carries out the reaction tRNA(Cys) + L-cysteine + ATP = L-cysteinyl-tRNA(Cys) + AMP + diphosphate. In Rhodopseudomonas palustris (strain HaA2), this protein is Cysteine--tRNA ligase.